The primary structure comprises 398 residues: Phosphoglycerate kinase (398 aa).

Substrate contacts are provided by residues aspartate 23 to asparagine 25, arginine 38, histidine 61 to lysine 64, arginine 122, and arginine 155. ATP is bound by residues lysine 206, glycine 297, glutamate 328, and glycine 354–serine 357.

The protein belongs to the phosphoglycerate kinase family. Monomer.

It localises to the cytoplasm. It catalyses the reaction (2R)-3-phosphoglycerate + ATP = (2R)-3-phospho-glyceroyl phosphate + ADP. The protein operates within carbohydrate degradation; glycolysis; pyruvate from D-glyceraldehyde 3-phosphate: step 2/5. This Clostridium kluyveri (strain NBRC 12016) protein is Phosphoglycerate kinase.